The sequence spans 295 residues: Small ribosomal subunit biogenesis GTPase RsgA (295 aa).

Residues 68–228 (KNLLTKPHVA…VVDTPGFANL (161 aa)) enclose the CP-type G domain. GTP is bound by residues 117 to 120 (NKMD) and 170 to 178 (GLSGVGKSS). 4 residues coordinate Zn(2+): Cys250, Cys255, His257, and Cys263.

This sequence belongs to the TRAFAC class YlqF/YawG GTPase family. RsgA subfamily. As to quaternary structure, monomer. Associates with 30S ribosomal subunit, binds 16S rRNA. Requires Zn(2+) as cofactor.

The protein localises to the cytoplasm. In terms of biological role, one of several proteins that assist in the late maturation steps of the functional core of the 30S ribosomal subunit. Helps release RbfA from mature subunits. May play a role in the assembly of ribosomal proteins into the subunit. Circularly permuted GTPase that catalyzes slow GTP hydrolysis, GTPase activity is stimulated by the 30S ribosomal subunit. The polypeptide is Small ribosomal subunit biogenesis GTPase RsgA (Thermotoga petrophila (strain ATCC BAA-488 / DSM 13995 / JCM 10881 / RKU-1)).